The following is a 471-amino-acid chain: Lincomycin resistance protein LmrB (471 aa).

Transmembrane regions (helical) follow at residues 13 to 35 (PIPI…TALN), 55 to 77 (LTTG…LQWF), 84 to 106 (FTAV…FAML), 111 to 133 (VVQA…LIFP), 140 to 162 (AMGM…SGLI), 167 to 189 (TWNW…GMKF), 201 to 223 (IDIL…FSSA), 227 to 249 (GWGS…LFVW), 269 to 291 (FTLG…ILLP), 329 to 351 (AYGP…FFLT), 358 to 380 (SALT…MMPA), and 445 to 467 (GIQN…SLFI).

Belongs to the major facilitator superfamily. EmrB family.

It is found in the cell membrane. Functionally, proton-dependent transporter. May mediate the efflux of lincomycin. The chain is Lincomycin resistance protein LmrB (lmrB) from Listeria monocytogenes serovar 1/2a (strain ATCC BAA-679 / EGD-e).